The chain runs to 880 residues: MSTVEPNVYDPQQVETSAQQFWDATRAFQVDENSEKPKFYCLSMLPYPSGALHMGHVRNYTISDVVSRYKRMTGHNVLQPMGWDAFGLPAENAAIKNKTAPAKWTYANIEHMRAQLKSLGYAIDWSREFATCTPDYYVHEQRMFTRLMRKGLAYRRNAVVNWDPIDQTVLANEQVIDGRGWRSGALVEKREIPQWFLRITDYAQELLDGLDQLDGWPDSVKTMQRNWIGRSEGLEIQFDVRDIDGAPLDPLRVFTTRPDTLMGVTFVSIAAEHPLALHAAKSNPELAALLETLKHGGVSEAELETQEKRGMATGLTAVHPISGEQVPVWVANFVLMGYGTGAVMAVPGHDQRDFEFANKYGLPIVQVVKLREPRNEEEQTWDATHWRDWYTDKSRELELINSAEFDGLDFGGAFEALAERFERKGQGQRRVNYRLRDWGVSRQRYWGCPIPVIYCAKCGAVPVPEDQLPVVLPENVEFSGTGSPIKTDPTWRQTTCPDCGGPAERETDTFDTFMESSWYVARYTSPNARDMVDRRANYWMPADLYVGGIEHAILHLMYFRFYHKLMRDARLVDSDEPVTNLLTQGMVIAETFYRDADNGGKDWINPADVEIQRDERGRVTGAVLIADGQPVHIGGTEKMSKSKNNGVDPQSMVAKYGADTVRLFSMFAAPPEQSLEWNEAGVDGMARFMRRLWVQVHKHVGEGAAVALDVAVLSAEQKAIRRKTHETIGKVSDDYGRRHSFNTAIAAVMELSNALAKFDDASEQGRAVRQEALEAMVLLLNPITPHASHALWQVLGRGETLLENVAFPQADASALVRDALTLAVQINGKLRGTIDVAADATREQIEALAQAEPNAAKFLEGLSVRKIIIVPGKIVNIVAG.

Positions 46 to 56 (PYPSGALHMGH) match the 'HIGH' region motif. A 'KMSKS' region motif is present at residues 638–642 (KMSKS). Position 641 (lysine 641) interacts with ATP.

It belongs to the class-I aminoacyl-tRNA synthetase family.

The protein localises to the cytoplasm. The catalysed reaction is tRNA(Leu) + L-leucine + ATP = L-leucyl-tRNA(Leu) + AMP + diphosphate. The polypeptide is Leucine--tRNA ligase (Xanthomonas euvesicatoria pv. vesicatoria (strain 85-10) (Xanthomonas campestris pv. vesicatoria)).